The sequence spans 247 residues: tRNA pseudouridine synthase A 1 (247 aa).

Aspartate 53 functions as the Nucleophile in the catalytic mechanism. Tyrosine 111 is a binding site for substrate.

Belongs to the tRNA pseudouridine synthase TruA family. As to quaternary structure, homodimer.

The enzyme catalyses uridine(38/39/40) in tRNA = pseudouridine(38/39/40) in tRNA. Formation of pseudouridine at positions 38, 39 and 40 in the anticodon stem and loop of transfer RNAs. In Bacillus cereus (strain ZK / E33L), this protein is tRNA pseudouridine synthase A 1.